The primary structure comprises 320 residues: (+)-corvol ether B synthase/(+)-corvol ether A synthase ((2E,6E)-farnesyl diphosphate cyclizing) (320 aa).

Mg(2+)-binding residues include D78 and D83. The short motif at 78–83 is the DDXXXD motif element; sequence DDLFVD. R171 is a binding site for substrate. Mg(2+)-binding residues include N217, S221, and E225.

It belongs to the terpene synthase family. Mg(2+) serves as cofactor.

It carries out the reaction (2E,6E)-farnesyl diphosphate + H2O = (+)-corvol ether B + diphosphate. It catalyses the reaction (2E,6E)-farnesyl diphosphate + H2O = (+)-corvol ether A + diphosphate. Its pathway is secondary metabolite biosynthesis; terpenoid biosynthesis. Catalyzes the conversion of (2E,6E)-farnesyl diphosphate (FPP) into (+)-corvol ether A and (+)-corvol ether B via a 1,10-cyclization, which requires isomerization of FPP to nerolidyl diphosphate (NPP) and then abstraction of the pyrophosphate from intermediate NPP leading to a (E,Z)-germacradienyl (helminthogermacradienyl) cation. The preferred substrate is (2E,6E)-farnesyl diphosphate (FPP), however geranyl diphosphate (GPP) is also able to produce small amounts of several acyclic and cyclic monoterpenes, with linalool as the main product. The protein is (+)-corvol ether B synthase/(+)-corvol ether A synthase ((2E,6E)-farnesyl diphosphate cyclizing) of Kitasatospora setae (strain ATCC 33774 / DSM 43861 / JCM 3304 / KCC A-0304 / NBRC 14216 / KM-6054) (Streptomyces setae).